A 446-amino-acid polypeptide reads, in one-letter code: Coiled-coil domain-containing protein 112 (446 aa).

Coiled-coil stretches lie at residues 23–116 and 219–400; these read LEEL…RKID and ERKK…NVSR. 2 disordered regions span residues 247–277 and 394–430; these read NNTPMLFHNKPEDNQKQKEEQRKKQKLAVEA and VENNVSRDPSRLYKPTKGWEERTKKIGPTGSGPLLHI. Basic and acidic residues predominate over residues 255–268; the sequence is NKPEDNQKQKEEQR.

Its subcellular location is the cytoplasm. It localises to the cytoskeleton. The protein resides in the microtubule organizing center. The protein localises to the centrosome. It is found in the centriolar satellite. This chain is Coiled-coil domain-containing protein 112 (CCDC112), found in Macaca fascicularis (Crab-eating macaque).